A 357-amino-acid chain; its full sequence is tRNA/tmRNA (uracil-C(5))-methyltransferase (357 aa).

S-adenosyl-L-methionine is bound by residues Q180, Y209, N214, E230, and D290. The Nucleophile role is filled by C315. The active-site Proton acceptor is the E349.

The protein belongs to the class I-like SAM-binding methyltransferase superfamily. RNA M5U methyltransferase family. TrmA subfamily.

The enzyme catalyses uridine(54) in tRNA + S-adenosyl-L-methionine = 5-methyluridine(54) in tRNA + S-adenosyl-L-homocysteine + H(+). The catalysed reaction is uridine(341) in tmRNA + S-adenosyl-L-methionine = 5-methyluridine(341) in tmRNA + S-adenosyl-L-homocysteine + H(+). In terms of biological role, dual-specificity methyltransferase that catalyzes the formation of 5-methyluridine at position 54 (m5U54) in all tRNAs, and that of position 341 (m5U341) in tmRNA (transfer-mRNA). The protein is tRNA/tmRNA (uracil-C(5))-methyltransferase of Campylobacter jejuni subsp. jejuni serotype O:23/36 (strain 81-176).